The following is a 307-amino-acid chain: D-alanine--D-alanine ligase (307 aa).

Residues Arg-101 to Asp-301 form the ATP-grasp domain. Position 128–182 (Leu-128–Thr-182) interacts with ATP. Asp-251, Glu-268, and Asn-270 together coordinate Mg(2+).

This sequence belongs to the D-alanine--D-alanine ligase family. It depends on Mg(2+) as a cofactor. Mn(2+) serves as cofactor.

The protein resides in the cytoplasm. It carries out the reaction 2 D-alanine + ATP = D-alanyl-D-alanine + ADP + phosphate + H(+). The protein operates within cell wall biogenesis; peptidoglycan biosynthesis. Cell wall formation. The sequence is that of D-alanine--D-alanine ligase from Beijerinckia indica subsp. indica (strain ATCC 9039 / DSM 1715 / NCIMB 8712).